Here is a 58-residue protein sequence, read N- to C-terminus: Protein translocase subunit SecE (58 aa).

The chain crosses the membrane as a helical span at residues 38–58 (IVMAFVGLLAYLIQLVLAFII).

The protein belongs to the SecE/SEC61-gamma family. As to quaternary structure, component of the Sec protein translocase complex. Heterotrimer consisting of SecY (alpha), SecG (beta) and SecE (gamma) subunits. The heterotrimers can form oligomers, although 1 heterotrimer is thought to be able to translocate proteins. Interacts with the ribosome. May interact with SecDF, and other proteins may be involved.

It localises to the cell membrane. Functionally, essential subunit of the Sec protein translocation channel SecYEG. Clamps together the 2 halves of SecY. May contact the channel plug during translocation. The protein is Protein translocase subunit SecE of Acidianus ambivalens (Desulfurolobus ambivalens).